We begin with the raw amino-acid sequence, 335 residues long: Phosphatidylglycerol--prolipoprotein diacylglyceryl transferase (335 aa).

3 helical membrane-spanning segments follow: residues 31 to 51 (IYWYGIIFVCGFLLAILTYSL), 67 to 87 (YIFLAIPMTIIGARLWSLAIG), and 100 to 120 (LAIQGGVIAGVLSAAIYFPLI). Arg-163 contacts a 1,2-diacyl-sn-glycero-3-phospho-(1'-sn-glycerol). 3 helical membrane-spanning segments follow: residues 213-233 (PLFLYESFFNVIVFVFIYFGL), 235-255 (YIKQLKIGFVSMSYFFFYGVI), and 277-297 (SLLLIFGVLGALYVQFIAPIL).

Belongs to the Lgt family.

The protein localises to the cell membrane. The catalysed reaction is L-cysteinyl-[prolipoprotein] + a 1,2-diacyl-sn-glycero-3-phospho-(1'-sn-glycerol) = an S-1,2-diacyl-sn-glyceryl-L-cysteinyl-[prolipoprotein] + sn-glycerol 1-phosphate + H(+). It functions in the pathway protein modification; lipoprotein biosynthesis (diacylglyceryl transfer). Catalyzes the transfer of the diacylglyceryl group from phosphatidylglycerol to the sulfhydryl group of the N-terminal cysteine of a prolipoprotein, the first step in the formation of mature lipoproteins. The chain is Phosphatidylglycerol--prolipoprotein diacylglyceryl transferase from Ureaplasma urealyticum serovar 10 (strain ATCC 33699 / Western).